The following is a 443-amino-acid chain: Deoxyguanosinetriphosphate triphosphohydrolase-like protein (443 aa).

The HD domain occupies 66 to 259 (RLTHSLEAAQ…MELADDIAYG (194 aa)).

Belongs to the dGTPase family. Type 2 subfamily.

The polypeptide is Deoxyguanosinetriphosphate triphosphohydrolase-like protein (Vibrio vulnificus (strain CMCP6)).